The chain runs to 293 residues: MLAAAKYRNLDPAFVERLAQEAAERFRDRGQAVKYAKRKLHQAFGAFVAGTPAQAVAACVAKIAAGAEPKEAGREAMRAHASSAERVDWLEPFYERVAQWCGPASSVIDLACGLNPLAVPWMALAPGATYACYDVDRTMAEALRALGTVYPVRVNAAAVDLVAAVPAAGVDVALVLKTLTTVEQQRGGRRVAEYRRELTAVQHHSDGARSLSGRRGYADDPDAIVQRAVHGTGYEVVDEAAFGTEALYHLVPLAGTAGRPAPAEGAAEPGATRPVVDVPATARPDADRVDPTG.

Residues phenylalanine 47, 80-82 (HAS), arginine 86, alanine 111, aspartate 134, 160-161 (DL), leucine 176, and glutamine 185 contribute to the S-adenosyl-L-methionine site. The segment covering 258–274 (GRPAPAEGAAEPGATRP) has biased composition (low complexity). Positions 258-293 (GRPAPAEGAAEPGATRPVVDVPATARPDADRVDPTG) are disordered. The segment covering 284-293 (PDADRVDPTG) has biased composition (basic and acidic residues).

The protein belongs to the methyltransferase superfamily. Aminoglycoside resistance family.

It catalyses the reaction guanosine(1405) in 16S rRNA + S-adenosyl-L-methionine = N(7)-methylguanosine(1405) in 16S rRNA + S-adenosyl-L-homocysteine. Specifically methylates the N(7) position of guanine 1405 in 16S rRNA. Confers resistance to aminoglycosides. The protein is 16S rRNA (guanine(1405)-N(7))-methyltransferase (fmrO) of Micromonospora olivasterospora.